The chain runs to 1117 residues: Mitochondrial protein cyt-4 (1117 aa).

In terms of domain architecture, RNB spans 561 to 916; that stretch reads RQDFYTSTVY…LVHWQIQAAL (356 aa). Positions 705-730 are disordered; sequence VVLEVGTPPSAEDEAPTRKMTKPDEL. Over residues 719–730 the composition is skewed to basic and acidic residues; sequence APTRKMTKPDEL.

The protein belongs to the RNR ribonuclease family. In terms of assembly, homodimer.

The protein resides in the mitochondrion. Its function is as follows. Required for RNA 5'- and 3'-end processing and splicing. May act on the RNA processing enzymes directly, or it may act on other regulatory molecules, which influence the activity or synthesis of these enzymes. The sequence is that of Mitochondrial protein cyt-4 (cyt-4) from Neurospora crassa (strain ATCC 24698 / 74-OR23-1A / CBS 708.71 / DSM 1257 / FGSC 987).